Here is a 138-residue protein sequence, read N- to C-terminus: Gastrula zinc finger protein XlCGF44.2 (138 aa).

C2H2-type zinc fingers lie at residues 5–27 (FACTKCKRRFCSNKELFSHKRIH), 32–54 (FVCAVCGKYFSDRIILQAHQRLH), 60–82 (FTCTQCHKSFLYKRNLHQHQQIH), 88–110 (YVCSTCGKQLKSKLTLNQHMKTH), and 116–138 (FACSECSKSFRFKAHLHRHQESH).

The protein belongs to the krueppel C2H2-type zinc-finger protein family.

It is found in the nucleus. In terms of biological role, may be involved in transcriptional regulation. This chain is Gastrula zinc finger protein XlCGF44.2, found in Xenopus laevis (African clawed frog).